Here is a 218-residue protein sequence, read N- to C-terminus: ATP phosphoribosyltransferase (218 aa).

The protein belongs to the ATP phosphoribosyltransferase family. Short subfamily. As to quaternary structure, heteromultimer composed of HisG and HisZ subunits.

The protein resides in the cytoplasm. The enzyme catalyses 1-(5-phospho-beta-D-ribosyl)-ATP + diphosphate = 5-phospho-alpha-D-ribose 1-diphosphate + ATP. It participates in amino-acid biosynthesis; L-histidine biosynthesis; L-histidine from 5-phospho-alpha-D-ribose 1-diphosphate: step 1/9. In terms of biological role, catalyzes the condensation of ATP and 5-phosphoribose 1-diphosphate to form N'-(5'-phosphoribosyl)-ATP (PR-ATP). Has a crucial role in the pathway because the rate of histidine biosynthesis seems to be controlled primarily by regulation of HisG enzymatic activity. The polypeptide is ATP phosphoribosyltransferase (Synechococcus elongatus (strain ATCC 33912 / PCC 7942 / FACHB-805) (Anacystis nidulans R2)).